Reading from the N-terminus, the 81-residue chain is MATSKSGGSSKNGRDSISKRLGVKRSGGQFVRSGEIIVRQRGTKFHKGKNSGLGRDHTIFALKDGVVEFKTSKGRKYINII.

Polar residues predominate over residues 1–11 (MATSKSGGSSK). The segment at 1–26 (MATSKSGGSSKNGRDSISKRLGVKRS) is disordered.

Belongs to the bacterial ribosomal protein bL27 family.

The protein is Large ribosomal subunit protein bL27 of Borrelia turicatae (strain 91E135).